The following is a 684-amino-acid chain: Threonine--tRNA ligase (684 aa).

A TGS domain is found at 1–60 (MSISITLHRSGTSRTQQVDTTTTGLDLFGSDRAVVAMRVDGNLVDLQRELHDGAEVEPVE). Residues 256–567 (DHRKLGAELD…LTEHYAGAFP (312 aa)) are catalytic. Residues C361, H412, and H544 each coordinate Zn(2+).

Belongs to the class-II aminoacyl-tRNA synthetase family. In terms of assembly, homodimer. Zn(2+) is required as a cofactor.

Its subcellular location is the cytoplasm. The catalysed reaction is tRNA(Thr) + L-threonine + ATP = L-threonyl-tRNA(Thr) + AMP + diphosphate + H(+). Functionally, catalyzes the attachment of threonine to tRNA(Thr) in a two-step reaction: L-threonine is first activated by ATP to form Thr-AMP and then transferred to the acceptor end of tRNA(Thr). Also edits incorrectly charged L-seryl-tRNA(Thr). The protein is Threonine--tRNA ligase of Cutibacterium acnes (strain DSM 16379 / KPA171202) (Propionibacterium acnes).